A 346-amino-acid chain; its full sequence is Proto-oncogene serine/threonine-protein kinase mos (346 aa).

The region spanning 60–341 (VCLLQRLGAG…RPLLVDLTSL (282 aa)) is the Protein kinase domain. ATP is bound by residues 66 to 74 (LGAGGFGSV) and K87. The active-site Proton acceptor is D201.

The protein belongs to the protein kinase superfamily. Ser/Thr protein kinase family.

It carries out the reaction L-seryl-[protein] + ATP = O-phospho-L-seryl-[protein] + ADP + H(+). It catalyses the reaction L-threonyl-[protein] + ATP = O-phospho-L-threonyl-[protein] + ADP + H(+). The chain is Proto-oncogene serine/threonine-protein kinase mos from Chlorocebus aethiops (Green monkey).